Consider the following 185-residue polypeptide: Ribosome-recycling factor (185 aa).

Belongs to the RRF family.

The protein localises to the cytoplasm. In terms of biological role, responsible for the release of ribosomes from messenger RNA at the termination of protein biosynthesis. May increase the efficiency of translation by recycling ribosomes from one round of translation to another. In Glaesserella parasuis serovar 5 (strain SH0165) (Haemophilus parasuis), this protein is Ribosome-recycling factor.